Here is a 485-residue protein sequence, read N- to C-terminus: Probable outer membrane usher protein LpfC' (485 aa).

This sequence belongs to the fimbrial export usher family.

Its subcellular location is the cell outer membrane. Its function is as follows. Part of the lpfABCC'DE fimbrial operon. LP fimbriae may participate in the interaction with eukaryotic cells by assisting in microcolony formation. Could be involved in the export and assembly of the fimbrial subunits across the outer membrane. The sequence is that of Probable outer membrane usher protein LpfC' (lpfC') from Escherichia coli O157:H7.